The primary structure comprises 182 residues: Putative manganese efflux pump MntP (182 aa).

The next 6 membrane-spanning stretches (helical) occupy residues Thr-6–Thr-26, Leu-37–Ser-57, Ala-59–Gly-79, Ser-104–Ile-126, Leu-131–Ala-149, and Met-164–Leu-181.

It belongs to the MntP (TC 9.B.29) family.

The protein resides in the cell inner membrane. Functionally, probably functions as a manganese efflux pump. This Syntrophobacter fumaroxidans (strain DSM 10017 / MPOB) protein is Putative manganese efflux pump MntP.